We begin with the raw amino-acid sequence, 174 residues long: Isomerase prhC (174 aa).

The protein belongs to the trt14 isomerase family. As to quaternary structure, homodimer.

It functions in the pathway secondary metabolite biosynthesis; terpenoid biosynthesis. In terms of biological role, isomerase; part of the gene cluster that mediates the biosynthesis of paraherquonin, a meroterpenoid with a unique, highly congested hexacyclic molecular architecture. The first step of the pathway is the synthesis of 3,5-dimethylorsellinic acid (DMOA) by the polyketide synthase prhL. Synthesis of DMOA is followed by farnesylation by the prenyltransferase prhE, methylesterification by the methyl-transferase prhM, epoxidation of the prenyl chain by the flavin-dependent monooxygenase prhF, and cyclization of the farnesyl moiety by the terpene cyclase prhH, to yield the tetracyclic intermediate, protoaustinoid A. The short chain dehydrogenase prhI then oxidizes the C-3 alcohol group of the terpene cyclase product to transform protoaustinoid A into protoaustinoid B. The FAD-binding monooxygenase prhJ catalyzes the oxidation of protoaustinoid B into preaustinoid A which is further oxidized into preaustinoid A1 by FAD-binding monooxygenase phrK. Finally, prhA leads to berkeleydione via the berkeleyone B intermediate. PrhA is a multifunctional dioxygenase that first desaturates at C5-C6 to form berkeleyone B, followed by rearrangement of the A/B-ring to form the cycloheptadiene moiety in berkeleydione. Berkeleydione serves as the key intermediate for the biosynthesis of paraherquonin as well as many other meroterpenoids. The cytochrome P450 monooxygenases prhB, prhD, and prhN, as well as the isomerase prhC, are probably involved in the late stage of paraherquonin biosynthesis, after the production of berkeleydione. Especially prhC might be a multifunctional enzyme that catalyzes the D-ring expansion via intramolecular methoxy rearrangement, as well as the hydrolysis of the expanded D-ring. The polypeptide is Isomerase prhC (Penicillium brasilianum).